The sequence spans 258 residues: UPF0246 protein YaaA (258 aa).

Belongs to the UPF0246 family.

This Escherichia coli O6:K15:H31 (strain 536 / UPEC) protein is UPF0246 protein YaaA.